The primary structure comprises 1928 residues: Myosin-1 (1928 aa).

Residues 8 to 71 (SSNMIVWIPD…RISDVFPVNP (64 aa)) enclose the Myosin N-terminal SH3-like domain. Residues 75–791 (DKVENMSELT…VLADLEKQKD (717 aa)) enclose the Myosin motor domain. 180–187 (GESGAGKT) lines the ATP pocket. The interval 460 to 529 (IGLLDIAGFE…LQLTIDLIES (70 aa)) is actin-binding. The span at 629–641 (SSSAGVEANISNQ) shows a compositional bias: polar residues. Residues 629–657 (SSSAGVEANISNQEVKKSARTSTFKTTSS) are disordered. The region spanning 794–823 (LNNIMIKLTATIRGYTVRKEITYHLQKLKK) is the IQ domain. Residues 856-1911 (SSNDMTRTKK…FWKSRYESTM (1056 aa)) adopt a coiled-coil conformation.

It belongs to the TRAFAC class myosin-kinesin ATPase superfamily. Myosin family.

Required for cell division. This chain is Myosin-1 (MYO1), found in Saccharomyces cerevisiae (strain ATCC 204508 / S288c) (Baker's yeast).